The primary structure comprises 641 residues: tRNA 5-methylaminomethyl-2-thiouridine biosynthesis bifunctional protein MnmC (641 aa).

Residues 1 to 219 (MTVSKILKQI…PYPICSAAVT (219 aa)) are tRNA (mnm(5)s(2)U34)-methyltransferase. Residues 232–641 (IGGGVASACL…GKALEVGVEV (410 aa)) are FAD-dependent cmnm(5)s(2)U34 oxidoreductase.

In the N-terminal section; belongs to the methyltransferase superfamily. tRNA (mnm(5)s(2)U34)-methyltransferase family. It in the C-terminal section; belongs to the DAO family. Requires FAD as cofactor.

The protein localises to the cytoplasm. The catalysed reaction is 5-aminomethyl-2-thiouridine(34) in tRNA + S-adenosyl-L-methionine = 5-methylaminomethyl-2-thiouridine(34) in tRNA + S-adenosyl-L-homocysteine + H(+). Its function is as follows. Catalyzes the last two steps in the biosynthesis of 5-methylaminomethyl-2-thiouridine (mnm(5)s(2)U) at the wobble position (U34) in tRNA. Catalyzes the FAD-dependent demodification of cmnm(5)s(2)U34 to nm(5)s(2)U34, followed by the transfer of a methyl group from S-adenosyl-L-methionine to nm(5)s(2)U34, to form mnm(5)s(2)U34. The chain is tRNA 5-methylaminomethyl-2-thiouridine biosynthesis bifunctional protein MnmC from Shewanella pealeana (strain ATCC 700345 / ANG-SQ1).